The following is a 423-amino-acid chain: UDP-N-acetylglucosamine 1-carboxyvinyltransferase (423 aa).

22-23 (KN) is a binding site for phosphoenolpyruvate. Arg-93 provides a ligand contact to UDP-N-acetyl-alpha-D-glucosamine. Cys-117 functions as the Proton donor in the catalytic mechanism. Position 117 is a 2-(S-cysteinyl)pyruvic acid O-phosphothioketal (Cys-117). Residues 122 to 126 (RPVDL), Asp-308, and Val-330 contribute to the UDP-N-acetyl-alpha-D-glucosamine site.

It belongs to the EPSP synthase family. MurA subfamily.

The protein resides in the cytoplasm. It catalyses the reaction phosphoenolpyruvate + UDP-N-acetyl-alpha-D-glucosamine = UDP-N-acetyl-3-O-(1-carboxyvinyl)-alpha-D-glucosamine + phosphate. It functions in the pathway cell wall biogenesis; peptidoglycan biosynthesis. Its function is as follows. Cell wall formation. Adds enolpyruvyl to UDP-N-acetylglucosamine. This chain is UDP-N-acetylglucosamine 1-carboxyvinyltransferase, found in Finegoldia magna (strain ATCC 29328 / DSM 20472 / WAL 2508) (Peptostreptococcus magnus).